The primary structure comprises 172 residues: Single-stranded DNA-binding protein 2 (172 aa).

An SSB domain is found at 6 to 111 (VNKVILVGHI…VIVNVGGTMQ (106 aa)). A DNA-binding region spans residues 55–61 (WHRVVVF). Positions 113–172 (LGRHNSQPQQEPQTPPTAAKGEGKAVKGAGNAAKGKNAAAPQQPPAQPDPAYDFDDDIPF) are disordered. Positions 119-153 (QPQQEPQTPPTAAKGEGKAVKGAGNAAKGKNAAAP) are enriched in low complexity. The Important for interaction with partner proteins signature appears at 167–172 (DDDIPF).

Homotetramer.

Functionally, plays an important role in DNA replication, recombination and repair. Binds to ssDNA and to an array of partner proteins to recruit them to their sites of action during DNA metabolism. This is Single-stranded DNA-binding protein 2 (ssb2) from Salmonella typhimurium (strain LT2 / SGSC1412 / ATCC 700720).